The primary structure comprises 431 residues: Enolase (431 aa).

Residue glutamine 167 coordinates (2R)-2-phosphoglycerate. Residue glutamate 209 is the Proton donor of the active site. Residues aspartate 246, glutamate 289, and aspartate 316 each coordinate Mg(2+). 4 residues coordinate (2R)-2-phosphoglycerate: lysine 341, arginine 370, serine 371, and lysine 392. Residue lysine 341 is the Proton acceptor of the active site.

The protein belongs to the enolase family. As to quaternary structure, component of the RNA degradosome, a multiprotein complex involved in RNA processing and mRNA degradation. Requires Mg(2+) as cofactor.

The protein resides in the cytoplasm. It localises to the secreted. Its subcellular location is the cell surface. The catalysed reaction is (2R)-2-phosphoglycerate = phosphoenolpyruvate + H2O. Its pathway is carbohydrate degradation; glycolysis; pyruvate from D-glyceraldehyde 3-phosphate: step 4/5. Catalyzes the reversible conversion of 2-phosphoglycerate (2-PG) into phosphoenolpyruvate (PEP). It is essential for the degradation of carbohydrates via glycolysis. The protein is Enolase of Shewanella sediminis (strain HAW-EB3).